We begin with the raw amino-acid sequence, 231 residues long: Phosphoribosylformylglycinamidine synthase subunit PurQ (231 aa).

A Glutamine amidotransferase type-1 domain is found at 3 to 231 (FGVLIFPGSN…ESMVGAMAKR (229 aa)). The Nucleophile role is filled by C86. Catalysis depends on residues H203 and E205.

In terms of assembly, part of the FGAM synthase complex composed of 1 PurL, 1 PurQ and 2 PurS subunits.

The protein localises to the cytoplasm. The catalysed reaction is N(2)-formyl-N(1)-(5-phospho-beta-D-ribosyl)glycinamide + L-glutamine + ATP + H2O = 2-formamido-N(1)-(5-O-phospho-beta-D-ribosyl)acetamidine + L-glutamate + ADP + phosphate + H(+). It catalyses the reaction L-glutamine + H2O = L-glutamate + NH4(+). The protein operates within purine metabolism; IMP biosynthesis via de novo pathway; 5-amino-1-(5-phospho-D-ribosyl)imidazole from N(2)-formyl-N(1)-(5-phospho-D-ribosyl)glycinamide: step 1/2. Functionally, part of the phosphoribosylformylglycinamidine synthase complex involved in the purines biosynthetic pathway. Catalyzes the ATP-dependent conversion of formylglycinamide ribonucleotide (FGAR) and glutamine to yield formylglycinamidine ribonucleotide (FGAM) and glutamate. The FGAM synthase complex is composed of three subunits. PurQ produces an ammonia molecule by converting glutamine to glutamate. PurL transfers the ammonia molecule to FGAR to form FGAM in an ATP-dependent manner. PurS interacts with PurQ and PurL and is thought to assist in the transfer of the ammonia molecule from PurQ to PurL. The sequence is that of Phosphoribosylformylglycinamidine synthase subunit PurQ from Koribacter versatilis (strain Ellin345).